A 227-amino-acid chain; its full sequence is Cytochrome c oxidase subunit 2 (227 aa).

Over 1 to 14 (MAYPHQLGFQDATS) the chain is Mitochondrial intermembrane. The chain crosses the membrane as a helical span at residues 15–45 (PIMEELLSFHDHTLMIVFLISSLVLYLISLM). Residues 46 to 59 (LTTKLTHTSTMDAQ) lie on the Mitochondrial matrix side of the membrane. A helical membrane pass occupies residues 60–87 (EVETVWTILPAIILIMIALPSLRILYMM). The Mitochondrial intermembrane portion of the chain corresponds to 88 to 227 (DEINNPLLTV…SFENWTTSMT (140 aa)). Histidine 161, cysteine 196, glutamate 198, cysteine 200, histidine 204, and methionine 207 together coordinate Cu cation. Glutamate 198 contributes to the Mg(2+) binding site.

The protein belongs to the cytochrome c oxidase subunit 2 family. Component of the cytochrome c oxidase (complex IV, CIV), a multisubunit enzyme composed of 14 subunits. The complex is composed of a catalytic core of 3 subunits MT-CO1, MT-CO2 and MT-CO3, encoded in the mitochondrial DNA, and 11 supernumerary subunits COX4I, COX5A, COX5B, COX6A, COX6B, COX6C, COX7A, COX7B, COX7C, COX8 and NDUFA4, which are encoded in the nuclear genome. The complex exists as a monomer or a dimer and forms supercomplexes (SCs) in the inner mitochondrial membrane with NADH-ubiquinone oxidoreductase (complex I, CI) and ubiquinol-cytochrome c oxidoreductase (cytochrome b-c1 complex, complex III, CIII), resulting in different assemblies (supercomplex SCI(1)III(2)IV(1) and megacomplex MCI(2)III(2)IV(2)). Found in a complex with TMEM177, COA6, COX18, COX20, SCO1 and SCO2. Interacts with TMEM177 in a COX20-dependent manner. Interacts with COX20. Interacts with COX16. Cu cation is required as a cofactor.

The protein localises to the mitochondrion inner membrane. The catalysed reaction is 4 Fe(II)-[cytochrome c] + O2 + 8 H(+)(in) = 4 Fe(III)-[cytochrome c] + 2 H2O + 4 H(+)(out). In terms of biological role, component of the cytochrome c oxidase, the last enzyme in the mitochondrial electron transport chain which drives oxidative phosphorylation. The respiratory chain contains 3 multisubunit complexes succinate dehydrogenase (complex II, CII), ubiquinol-cytochrome c oxidoreductase (cytochrome b-c1 complex, complex III, CIII) and cytochrome c oxidase (complex IV, CIV), that cooperate to transfer electrons derived from NADH and succinate to molecular oxygen, creating an electrochemical gradient over the inner membrane that drives transmembrane transport and the ATP synthase. Cytochrome c oxidase is the component of the respiratory chain that catalyzes the reduction of oxygen to water. Electrons originating from reduced cytochrome c in the intermembrane space (IMS) are transferred via the dinuclear copper A center (CU(A)) of subunit 2 and heme A of subunit 1 to the active site in subunit 1, a binuclear center (BNC) formed by heme A3 and copper B (CU(B)). The BNC reduces molecular oxygen to 2 water molecules using 4 electrons from cytochrome c in the IMS and 4 protons from the mitochondrial matrix. The protein is Cytochrome c oxidase subunit 2 (MT-CO2) of Georychus capensis (Cape mole rat).